Consider the following 485-residue polypeptide: Hexokinase (485 aa).

A Phosphoserine modification is found at serine 15. One can recognise a Hexokinase domain in the interval 21–468 (ANLMEQIHGL…SGVGAAIIAC (448 aa)). Positions 75–208 (TGKETGDFLA…NIPINVVALI (134 aa)) are hexokinase small subdomain. ATP is bound at residue lysine 111. The glucose-binding stretch occupies residues 151 to 177 (PLGFTFSYPASQKKINSGVLQRWTKGF). Residues 209-457 (NDTTGTLVAS…HPIQLVAAED (249 aa)) form a hexokinase large subdomain region.

As to quaternary structure, monomer and homodimer. The monomeric form is active, the homodimeric form inactive.

The catalysed reaction is a D-hexose + ATP = a D-hexose 6-phosphate + ADP + H(+). It carries out the reaction D-fructose + ATP = D-fructose 6-phosphate + ADP + H(+). The enzyme catalyses D-glucose + ATP = D-glucose 6-phosphate + ADP + H(+). It functions in the pathway carbohydrate metabolism; hexose metabolism. It participates in carbohydrate degradation; glycolysis; D-glyceraldehyde 3-phosphate and glycerone phosphate from D-glucose: step 1/4. Catalyzes the phosphorylation of hexose, such as D-glucose and D-fructose, to hexose 6-phosphate (D-glucose 6-phosphate and D-fructose 6-phosphate, respectively). Has higher affinity for D-glucose. Mediates the initial step of glycolysis by catalyzing phosphorylation of D-glucose to D-glucose 6-phosphate. This Kluyveromyces lactis (strain ATCC 8585 / CBS 2359 / DSM 70799 / NBRC 1267 / NRRL Y-1140 / WM37) (Yeast) protein is Hexokinase (RAG5).